The sequence spans 181 residues: Ribonuclease HII (181 aa).

An RNase H type-2 domain is found at Met-1–Ile-181. Asp-6, Glu-7, and Asp-98 together coordinate a divalent metal cation.

The protein belongs to the RNase HII family. Mn(2+) serves as cofactor. Mg(2+) is required as a cofactor.

It localises to the cytoplasm. It catalyses the reaction Endonucleolytic cleavage to 5'-phosphomonoester.. In terms of biological role, endonuclease that specifically degrades the RNA of RNA-DNA hybrids. The polypeptide is Ribonuclease HII (rnhB) (Borreliella burgdorferi (strain ATCC 35210 / DSM 4680 / CIP 102532 / B31) (Borrelia burgdorferi)).